The primary structure comprises 388 residues: Chorismate synthase (388 aa).

Residues arginine 39 and arginine 45 each coordinate NADP(+). Residues 130 to 132, 251 to 252, glycine 296, 311 to 315, and arginine 337 contribute to the FMN site; these read RSS, NA, and KPIPT.

Belongs to the chorismate synthase family. As to quaternary structure, homotetramer. FMNH2 serves as cofactor.

The enzyme catalyses 5-O-(1-carboxyvinyl)-3-phosphoshikimate = chorismate + phosphate. It functions in the pathway metabolic intermediate biosynthesis; chorismate biosynthesis; chorismate from D-erythrose 4-phosphate and phosphoenolpyruvate: step 7/7. Functionally, catalyzes the anti-1,4-elimination of the C-3 phosphate and the C-6 proR hydrogen from 5-enolpyruvylshikimate-3-phosphate (EPSP) to yield chorismate, which is the branch point compound that serves as the starting substrate for the three terminal pathways of aromatic amino acid biosynthesis. This reaction introduces a second double bond into the aromatic ring system. The polypeptide is Chorismate synthase (Streptococcus sanguinis (strain SK36)).